Consider the following 535-residue polypeptide: Ribonuclease Y 2 (535 aa).

The helical transmembrane segment at 1-21 (MLITGLIIGCLLIGLVIGYVV) threads the bilayer. The KH domain maps to 207 to 268 (LEHTVTVPNG…IRREVARVAL (62 aa)). One can recognise an HD domain in the interval 334 to 427 (VLLHSIEVAQ…VAAADAISGA (94 aa)).

This sequence belongs to the RNase Y family.

The protein resides in the cell membrane. In terms of biological role, endoribonuclease that initiates mRNA decay. The chain is Ribonuclease Y 2 from Levilactobacillus brevis (strain ATCC 367 / BCRC 12310 / CIP 105137 / JCM 1170 / LMG 11437 / NCIMB 947 / NCTC 947) (Lactobacillus brevis).